Consider the following 487-residue polypeptide: Spermatogenesis-associated protein 6 (487 aa).

The first 17 residues, 1-17 (MPKVKALQCALALEIRS), serve as a signal peptide directing secretion. The interval 170–221 (APVEKPHSRLQNRTSRSQKKKSKSPERNKYCINAKNYEQPTTSKSHSPSPYT) is disordered. Residue asparagine 181 is glycosylated (N-linked (GlcNAc...) asparagine). Positions 205-219 (NYEQPTTSKSHSPSP) are enriched in polar residues. Phosphoserine occurs at positions 216 and 218. Lysine 247 is covalently cross-linked (Glycyl lysine isopeptide (Lys-Gly) (interchain with G-Cter in SUMO2)). Residues serine 264, serine 273, serine 324, serine 342, serine 345, serine 353, serine 423, serine 464, and serine 486 each carry the phosphoserine modification.

It belongs to the SPATA6 family. Interacts with MYL6.

Its subcellular location is the secreted. The protein localises to the cell projection. It is found in the cilium. It localises to the flagellum. Required for formation of the sperm connecting piece during spermiogenesis. Sperm connecting piece is essential for linking the developing flagellum to the head during late spermiogenesis. May be involved in myosin-based microfilament transport through interaction with myosin subunits. This is Spermatogenesis-associated protein 6 (SPATA6) from Bos taurus (Bovine).